Consider the following 412-residue polypeptide: MAEPLRGRGPRSRGGRGARRARGARGRCPRARQSPARLIPDTVLVDLVSDSDEEVLEVADPVEVPVARLPAPAKPEQDSDSDSEGAAEGPAGAPRTLVRRRRRRLLDPGEAPVVPVYSGKVQSSLNLIPDNSSLLKLCPSEPEDEADLTNSGSSPSEDDALPSGSPWRKKLRKKCEKEEKKMEEFPDQDISPLPQPSSRNKSRKHTEALQKLREVNKRLQDLRSCLSPKQHQSPALQSTDDEVVLVEGPVLPQSSRLFTLKIRCRADLVRLPVRMSEPLQNVVDHMANHLGVSPNRILLLFGESELSPTATPSTLKLGVADIIDCVVLASSSEATETSQELRLRVQGKEKHQMLEISLSPDSPLKVLMSHYEEAMGLSGHKLSFFFDGTKLSGKELPADLGLESGDLIEVWG.

The segment at methionine 1–leucine 38 is disordered. The segment covering arginine 8–arginine 30 has biased composition (basic residues). Serine 49, serine 51, serine 79, serine 81, and serine 83 each carry phosphoserine. The tract at residues valine 58–proline 115 is disordered. Over residues alanine 86–threonine 96 the composition is skewed to low complexity. Serine 118 is modified (phosphoserine). Lysine 120 is covalently cross-linked (Glycyl lysine isopeptide (Lys-Gly) (interchain with G-Cter in SUMO2)). The disordered stretch occupies residues lysine 136–threonine 206. Positions arginine 168 to serine 227 form a coiled coil. Residues cysteine 175 to glutamate 184 are compositionally biased toward basic and acidic residues. Phosphoserine is present on residues serine 191, serine 197, and serine 307. Phosphothreonine occurs at positions 309 and 311. A Ubiquitin-like domain is found at leucine 341–glycine 412. Residues serine 362 and serine 383 each carry the phosphoserine modification.

As to quaternary structure, interacts with NFATC2, TRAF1, TRAF2 and PRMT1. Interacts with UBE2I/UBC9. Methylation at the N-terminus by PRMT1 modulates interaction with the NFAT complex and results in augmented cytokine production. Highest level detected in spleen, thymus and testis.

Its subcellular location is the nucleus. The protein resides in the cytoplasm. Its function is as follows. In T-helper 2 (Th2) cells, regulates the magnitude of NFAT-driven transcription of a specific subset of cytokine genes, including IL3, IL4, IL5 and IL13, but not IL2. Recruits PRMT1 to the IL4 promoter; this leads to enhancement of histone H4 'Arg-3'-methylation and facilitates subsequent histone acetylation at the IL4 locus, thus promotes robust cytokine expression. Down-regulates formation of poly-SUMO chains by UBE2I/UBC9. This Mus musculus (Mouse) protein is NFATC2-interacting protein (Nfatc2ip).